A 193-amino-acid polypeptide reads, in one-letter code: dCTP deaminase (193 aa).

Residues 110 to 115 (RSSLAR), Asp128, 136 to 138 (VLE), Tyr171, Lys178, and Gln182 each bind dCTP. The active-site Proton donor/acceptor is the Glu138. Residues 169 to 193 (RPYNSRQDAKYRDQQGAVASRIDKD) are disordered.

Belongs to the dCTP deaminase family. Homotrimer.

It carries out the reaction dCTP + H2O + H(+) = dUTP + NH4(+). It participates in pyrimidine metabolism; dUMP biosynthesis; dUMP from dCTP (dUTP route): step 1/2. Functionally, catalyzes the deamination of dCTP to dUTP. This is dCTP deaminase from Serratia proteamaculans (strain 568).